The primary structure comprises 305 residues: Undecaprenyl-diphosphatase (305 aa).

Transmembrane regions (helical) follow at residues 18-38 (GVTE…PALV), 55-75 (YLAF…VFFW), 103-123 (WLIV…EQLF), 130-150 (PVPA…GEVL), 187-207 (GVLI…RSGI), 225-245 (FSFL…IPEL), 246-266 (FGPL…ASFV), and 284-304 (LTPF…WLAL).

Belongs to the UppP family.

The protein resides in the cell membrane. It catalyses the reaction di-trans,octa-cis-undecaprenyl diphosphate + H2O = di-trans,octa-cis-undecaprenyl phosphate + phosphate + H(+). In terms of biological role, catalyzes the dephosphorylation of undecaprenyl diphosphate (UPP). Confers resistance to bacitracin. The polypeptide is Undecaprenyl-diphosphatase (Mycolicibacterium paratuberculosis (strain ATCC BAA-968 / K-10) (Mycobacterium paratuberculosis)).